The primary structure comprises 137 residues: Endoribonuclease YbeY (137 aa).

Zn(2+)-binding residues include His105, His109, and Asp115.

The protein belongs to the endoribonuclease YbeY family. The cofactor is Zn(2+).

It localises to the cytoplasm. In terms of biological role, single strand-specific metallo-endoribonuclease involved in late-stage 70S ribosome quality control and in maturation of the 3' terminus of the 16S rRNA. This chain is Endoribonuclease YbeY, found in Chlorobaculum tepidum (strain ATCC 49652 / DSM 12025 / NBRC 103806 / TLS) (Chlorobium tepidum).